The chain runs to 139 residues: Actin-depolymerizing factor 1 (139 aa).

The 135-residue stretch at 5–139 (ASGMAVCDEC…SMDIVKSRAL (135 aa)) folds into the ADF-H domain.

It belongs to the actin-binding proteins ADF family.

Its function is as follows. Actin-depolymerizing protein. Severs actin filaments (F-actin) and binds to actin monomers. The polypeptide is Actin-depolymerizing factor 1 (ADF1) (Oryza sativa subsp. japonica (Rice)).